An 862-amino-acid chain; its full sequence is Kinesin-like protein KIN-7E (862 aa).

One can recognise a Kinesin motor domain in the interval 24-346 (KILVLVRLRP…LLFACCAKEV (323 aa)). Residue 110-117 (GQTSSGKT) participates in ATP binding. A coiled-coil region spans residues 355–428 (VMSDKALVKQ…RLEDFMKMVE (74 aa)). Disordered stretches follow at residues 463-505 (RTSF…QSEE) and 542-632 (ANGE…TPLV). A compositionally biased stretch (polar residues) spans 465–476 (SFISDGTSTPLS). Basic and acidic residues predominate over residues 494 to 505 (MSPRHSGDQSEE). The segment covering 612 to 621 (DSMTSRGSDS) has biased composition (polar residues). Residue Lys734 forms a Glycyl lysine isopeptide (Lys-Gly) (interchain with G-Cter in ubiquitin) linkage.

This sequence belongs to the TRAFAC class myosin-kinesin ATPase superfamily. Kinesin family. KIN-7 subfamily.

This Arabidopsis thaliana (Mouse-ear cress) protein is Kinesin-like protein KIN-7E.